Reading from the N-terminus, the 204-residue chain is Large ribosomal subunit protein bL25 (204 aa).

The protein belongs to the bacterial ribosomal protein bL25 family. CTC subfamily. Part of the 50S ribosomal subunit; part of the 5S rRNA/L5/L18/L25 subcomplex. Contacts the 5S rRNA. Binds to the 5S rRNA independently of L5 and L18.

In terms of biological role, this is one of the proteins that binds to the 5S RNA in the ribosome where it forms part of the central protuberance. This Pseudomonas syringae pv. syringae (strain B728a) protein is Large ribosomal subunit protein bL25.